Consider the following 127-residue polypeptide: Holo-[acyl-carrier-protein] synthase (127 aa).

D9 and E58 together coordinate Mg(2+).

This sequence belongs to the P-Pant transferase superfamily. AcpS family. It depends on Mg(2+) as a cofactor.

Its subcellular location is the cytoplasm. The catalysed reaction is apo-[ACP] + CoA = holo-[ACP] + adenosine 3',5'-bisphosphate + H(+). In terms of biological role, transfers the 4'-phosphopantetheine moiety from coenzyme A to a Ser of acyl-carrier-protein. The sequence is that of Holo-[acyl-carrier-protein] synthase from Shewanella baltica (strain OS155 / ATCC BAA-1091).